Here is a 228-residue protein sequence, read N- to C-terminus: Thermonuclease (228 aa).

Residues 1 to 23 (MTEYLLSAGICMAIVSILLIGMA) form the signal peptide. A propeptide spanning residues 24-60 (ISNVSKGQYAKRFFYFATSCLVLTLVVVSSLSSSANA) is cleaved from the precursor. Residues 58–70 (ANASQTDNGVNRS) are compositionally biased toward polar residues. A disordered region spans residues 58–83 (ANASQTDNGVNRSGSEDPTVYSATST). D100 contacts Ca(2+). Residue R114 is part of the active site. Residues D119 and T120 each coordinate Ca(2+). Residues E122 and R166 contribute to the active site.

It belongs to the thermonuclease family. Requires Ca(2+) as cofactor.

The protein localises to the secreted. It catalyses the reaction Endonucleolytic cleavage to nucleoside 3'-phosphates and 3'-phosphooligonucleotide end-products.. In terms of biological role, enzyme that catalyzes the hydrolysis of both DNA and RNA at the 5' position of the phosphodiester bond. This Staphylococcus aureus (strain COL) protein is Thermonuclease (nuc).